The following is a 144-amino-acid chain: Large ribosomal subunit protein uL15 (144 aa).

A disordered region spans residues 1–57 (MELNNIKPADGAKKDKRRVGRGIGSGLGKTAGRGHKGQKSRAGGFHKVGFEGGQMPM). The segment covering 21–31 (RGIGSGLGKTA) has biased composition (gly residues).

Belongs to the universal ribosomal protein uL15 family. Part of the 50S ribosomal subunit.

Functionally, binds to the 23S rRNA. The polypeptide is Large ribosomal subunit protein uL15 (Thiobacillus denitrificans (strain ATCC 25259 / T1)).